The primary structure comprises 122 residues: Basic phospholipase A2 LmTX-II (122 aa).

6 disulfides stabilise this stretch: cysteine 26–cysteine 115, cysteine 28–cysteine 44, cysteine 43–cysteine 95, cysteine 49–cysteine 122, cysteine 50–cysteine 88, and cysteine 75–cysteine 86. Residues tyrosine 27, glycine 29, and glycine 31 each coordinate Ca(2+). Histidine 47 is an active-site residue. Aspartate 48 lines the Ca(2+) pocket. The active site involves aspartate 89.

Monomer. Ca(2+) serves as cofactor. In terms of tissue distribution, expressed by the venom gland.

It localises to the secreted. It catalyses the reaction a 1,2-diacyl-sn-glycero-3-phosphocholine + H2O = a 1-acyl-sn-glycero-3-phosphocholine + a fatty acid + H(+). Its function is as follows. Snake venom phospholipase A2 (PLA2) that may display neurotoxic and myotoxic activities. May induce inflammatory edema by mechanisms involving mast cell activation and arachidonic acid metabolites. May increase plasma creatine kinase activity. PLA2 catalyzes the calcium-dependent hydrolysis of the 2-acyl groups in 3-sn-phosphoglycerides. The protein is Basic phospholipase A2 LmTX-II of Lachesis muta muta (Bushmaster).